The primary structure comprises 200 residues: Recombination protein RecR (200 aa).

The C4-type zinc-finger motif lies at 60–75 (CVYCQALTEDDVCNIC). The region spanning 83 to 177 (TKLCIIESML…KISRIGFGVP (95 aa)) is the Toprim domain.

This sequence belongs to the RecR family.

In terms of biological role, may play a role in DNA repair. It seems to be involved in an RecBC-independent recombinational process of DNA repair. It may act with RecF and RecO. The sequence is that of Recombination protein RecR from Francisella tularensis subsp. holarctica (strain OSU18).